Here is a 318-residue protein sequence, read N- to C-terminus: Receptor homology region, transmembrane domain- and RING domain-containing protein 5 (318 aa).

The N-terminal stretch at 1 to 20 (MNYSWITIMSLLVICKLASA) is a signal peptide. Over 22 to 163 (VVLIGKNTIL…IPGFGISSWS (142 aa)) the chain is Lumenal. C62 and C87 are disulfide-bonded. The PA domain occupies 70 to 143 (EKRSKYRSSY…RASGEVLKGY (74 aa)). N121 is a glycosylation site (N-linked (GlcNAc...) asparagine). A helical transmembrane segment spans residues 164 to 184 (IMGITFISLLAMSAILATCFV). The Cytoplasmic segment spans residues 185-318 (VRRHQIRQSV…DLPIVVRVYL (134 aa)). The RING-type; atypical zinc finger occupies 233–275 (CAICIDDYCVGEKLRILPCKHKYHAVCIDSWLGRCRSFCPVCK).

It localises to the prevacuolar compartment membrane. It is found in the protein storage vacuole membrane. Involved in the trafficking of vacuolar proteins. May function as a sorting receptor for protein trafficking to the protein storage vacuole (PSV). The sequence is that of Receptor homology region, transmembrane domain- and RING domain-containing protein 5 (RMR5) from Arabidopsis thaliana (Mouse-ear cress).